A 526-amino-acid polypeptide reads, in one-letter code: Probable feruloyl esterase B-2 (526 aa).

The signal sequence occupies residues 1–18 (MTKLSLLPLLTLASAVLA). Cystine bridges form between Cys27–Cys74 and Cys62–Cys113. Asn52 carries N-linked (GlcNAc...) asparagine glycosylation. N-linked (GlcNAc...) asparagine glycosylation occurs at Asn137. Disulfide bonds link Cys186/Cys441, Cys255/Cys272, Cys281/Cys291, and Cys503/Cys525. Ser187 acts as the Acyl-ester intermediate in catalysis. Residue Asn233 is glycosylated (N-linked (GlcNAc...) asparagine). Residues Asp256, Asp259, Ala261, Asp263, and Ile265 each coordinate Ca(2+). Residues Asp400 and His440 each act as charge relay system in the active site. An N-linked (GlcNAc...) asparagine glycan is attached at Asn516.

Belongs to the tannase family.

Its subcellular location is the secreted. The enzyme catalyses feruloyl-polysaccharide + H2O = ferulate + polysaccharide.. Its function is as follows. Involved in degradation of plant cell walls. Hydrolyzes the feruloyl-arabinose ester bond in arabinoxylans as well as the feruloyl-galactose and feruloyl-arabinose ester bonds in pectin. The sequence is that of Probable feruloyl esterase B-2 (faeB-2) from Aspergillus fumigatus (strain ATCC MYA-4609 / CBS 101355 / FGSC A1100 / Af293) (Neosartorya fumigata).